Consider the following 156-residue polypeptide: MGASRLYTLVLVLQPQRVLLGMKKRGFGAGRWNGFGGKVQEGETIEDGARRELQEESGLTVDALHKVGQIVFEFVGEPELMDVHVFCTDSIQGTPVESDEMRPCWFQLDQIPFKDMWPDDSYWFPLLLQKKKFHGYFKFQGQDTILDYTLREVDTV.

The 130-residue stretch at 3–132 (ASRLYTLVLV…WFPLLLQKKK (130 aa)) folds into the Nudix hydrolase domain. Residue T8 coordinates 2-oxo-dATP. 8-oxo-dGMP is bound by residues T8 and K23. T8 and K23 together coordinate 8-oxo-dGTP. Residues T8 and K23 each contribute to the N(6)-methyl-AMP site. The O(6)-methyl-dGMP site is built by T8 and K23. F27 contributes to the 8-oxo-ATP binding site. 2-oxo-dATP contacts are provided by residues N33 and 35 to 38 (FGGK). N33 is a binding site for 8-oxo-dGMP. 8-oxo-dGTP is bound by residues N33 and 35–38 (FGGK). Position 33 (N33) interacts with O(6)-methyl-dGMP. 8-oxo-ATP contacts are provided by residues 35–38 (FGGK) and E52. Residues G36, E52, E55, E56, and E100 each coordinate Mg(2+). Residues 37–58 (GKVQEGETIEDGARRELQEESG) carry the Nudix box motif. Position 56 (E56) interacts with 8-oxo-ATP. 117 to 120 (WPDD) contacts 2-oxo-dATP. 117–120 (WPDD) serves as a coordination point for 8-oxo-dGMP. 8-oxo-dGTP is bound at residue 117–120 (WPDD). 117 to 120 (WPDD) contributes to the N(6)-methyl-AMP binding site. 117–120 (WPDD) is an O(6)-methyl-dGMP binding site. 117-120 (WPDD) lines the 8-oxo-ATP pocket.

It belongs to the Nudix hydrolase family. In terms of assembly, monomer. Requires Mg(2+) as cofactor. In terms of processing, the N-terminus is blocked. Widely expressed with highest expression in thymus, testis, embryo and proliferating blood lymphocytes.

The protein resides in the cytoplasm. It localises to the cytosol. The protein localises to the mitochondrion matrix. It is found in the nucleus. It catalyses the reaction 2-oxo-dATP + H2O = 2-oxo-dAMP + diphosphate + H(+). The catalysed reaction is 2-oxo-ATP + H2O = 2-oxo-AMP + diphosphate + H(+). The enzyme catalyses 8-oxo-dGTP + H2O = 8-oxo-dGMP + diphosphate + H(+). It carries out the reaction 8-oxo-dATP + H2O = 8-oxo-dAMP + diphosphate + H(+). It catalyses the reaction O(6)-methyl-dGTP + H2O = O(6)-methyl-dGMP + diphosphate + H(+). The catalysed reaction is N(6)-methyl-dATP + H2O = N(6)-methyl-dAMP + diphosphate + H(+). The enzyme catalyses N(6)-methyl-ATP + H2O = N(6)-methyl-AMP + diphosphate + H(+). Inhibited by 2-oxo-dADP and 8-oxo-dGDP. Functionally, oxidized purine nucleoside triphosphate hydrolase which is a prominent sanitizer of the oxidized nucleotide pool. Catalyzes the hydrolysis of 2-oxo-dATP (2-hydroxy-dATP) into 2-oxo-dAMP. Also has a significant hydrolase activity toward 2-oxo-ATP, 8-oxo-dGTP and 8-oxo-dATP. Through the hydrolysis of oxidized purine nucleoside triphosphates, prevents their incorporation into DNA and the subsequent transversions A:T to C:G and G:C to T:A. Also catalyzes the hydrolysis of methylated purine nucleoside triphosphate preventing their integration into DNA. Through this antimutagenic activity protects cells from oxidative stress. This is Oxidized purine nucleoside triphosphate hydrolase (NUDT1) from Homo sapiens (Human).